A 1014-amino-acid polypeptide reads, in one-letter code: Exportin-T (1014 aa).

This sequence belongs to the exportin family.

The protein localises to the nucleus. It is found in the cytoplasm. TRNA nucleus export receptor which facilitates tRNA translocation across the nuclear pore complex. Involved in pre-tRNA splicing, probably by affecting the interaction of pre-tRNA with splicing endonuclease. The sequence is that of Exportin-T (LOS1) from Podospora anserina (strain S / ATCC MYA-4624 / DSM 980 / FGSC 10383) (Pleurage anserina).